Here is a 275-residue protein sequence, read N- to C-terminus: L-aspartate dehydrogenase (275 aa).

Residues Ala130 and Asn196 each contribute to the NAD(+) site. His226 is an active-site residue.

The protein belongs to the L-aspartate dehydrogenase family.

It carries out the reaction L-aspartate + NADP(+) + H2O = oxaloacetate + NH4(+) + NADPH + H(+). The catalysed reaction is L-aspartate + NAD(+) + H2O = oxaloacetate + NH4(+) + NADH + H(+). It functions in the pathway cofactor biosynthesis; NAD(+) biosynthesis; iminoaspartate from L-aspartate (dehydrogenase route): step 1/1. Specifically catalyzes the NAD or NADP-dependent dehydrogenation of L-aspartate to iminoaspartate. The polypeptide is L-aspartate dehydrogenase (Ruegeria pomeroyi (strain ATCC 700808 / DSM 15171 / DSS-3) (Silicibacter pomeroyi)).